The following is a 111-amino-acid chain: Disintegrin acostatin-alpha (111 aa).

A signal peptide spans 1-20 (MIQVLLVTLCLAVFPYQGSS). The propeptide occupies 21-46 (IILESGNVNDYEVVYPRKVTALPKGA). In terms of domain architecture, Disintegrin spans 47–111 (IQPKNPCCDA…GDCPRKHFYA (65 aa)). A Pyrrolidone carboxylic acid; in Disintegrin acostatin-alpha, processed form modification is found at Gln48. Cystine bridges form between Cys53/Cys76, Cys67/Cys73, Cys72/Cys97, and Cys85/Cys104. Residues 89–91 (RGD) carry the Cell attachment site motif. The propeptide occupies 110 to 111 (YA).

It belongs to the disintegrin family. Dimeric disintegrin subfamily. In terms of assembly, heterodimer with subunit beta; disulfide-linked. Expressed by the venom gland.

It localises to the secreted. Its function is as follows. Inhibits fibrinogen interaction with platelets. Acts by binding to alpha-IIb/beta-3 (ITGA2B/ITGB3) on the platelet surface and inhibits ADP-induced platelet aggregation in human platelet-rich plasma. This Agkistrodon contortrix contortrix (Southern copperhead) protein is Disintegrin acostatin-alpha.